A 24-amino-acid polypeptide reads, in one-letter code: Heat shock 70 kDa protein 4L (24 aa).

Position 19 is a phosphothreonine (Thr-19).

The protein belongs to the heat shock protein 70 family. Homodimer. In the testis, forms a complex with p53 at 32.5 degrees Celsius which is scrotal temperature but not at 37 or 42 degrees Celsius. As to expression, expressed at high levels in testis and at much lower levels in brain. In testis, expressed mainly in germ cells. Widespread in brain with highest expression in cerebellum and medulla oblongata. Also expressed in renal medulla of water-restricted animals.

The protein localises to the cytoplasm. It localises to the nucleus. Possesses chaperone activity in vitro where it inhibits aggregation of citrate synthase. In Rattus norvegicus (Rat), this protein is Heat shock 70 kDa protein 4L (Hspa4l).